A 346-amino-acid polypeptide reads, in one-letter code: Flap endonuclease 1 (346 aa).

Positions 1 to 102 are N-domain; that stretch reads MGVTELGKLI…AEIEERRKVK (102 aa). 7 residues coordinate Mg(2+): Asp31, Asp84, Glu156, Glu158, Asp177, Asp179, and Asp239. The interval 120–261 is I-domain; it reads DVAKYMKRAV…KALKLVWEFG (142 aa).

The protein belongs to the XPG/RAD2 endonuclease family. FEN1 subfamily. In terms of assembly, interacts with PCNA. PCNA stimulates the nuclease activity without altering cleavage specificity. Mg(2+) serves as cofactor.

Its function is as follows. Structure-specific nuclease with 5'-flap endonuclease and 5'-3' exonuclease activities involved in DNA replication and repair. During DNA replication, cleaves the 5'-overhanging flap structure that is generated by displacement synthesis when DNA polymerase encounters the 5'-end of a downstream Okazaki fragment. Binds the unpaired 3'-DNA end and kinks the DNA to facilitate 5' cleavage specificity. Cleaves one nucleotide into the double-stranded DNA from the junction in flap DNA, leaving a nick for ligation. Also involved in the base excision repair (BER) pathway. Acts as a genome stabilization factor that prevents flaps from equilibrating into structures that lead to duplications and deletions. Also possesses 5'-3' exonuclease activity on nicked or gapped double-stranded DNA. The chain is Flap endonuclease 1 from Pyrobaculum islandicum (strain DSM 4184 / JCM 9189 / GEO3).